The following is a 262-amino-acid chain: Cap-specific mRNA (nucleoside-2'-O-)-methyltransferase (262 aa).

The RrmJ-type SAM-dependent 2'-O-MTase domain maps to 34-226; sequence TRRPRCWRKL…ERYLICFNKL (193 aa). 2 residues coordinate S-adenosyl-L-methionine: Gly67 and Asp140. Lys180 (proton acceptor) is an active-site residue.

The catalysed reaction is a 5'-end (N(7)-methyl 5'-triphosphoguanosine)-ribonucleoside in mRNA + S-adenosyl-L-methionine = a 5'-end (N(7)-methyl 5'-triphosphoguanosine)-(2'-O-methyl-ribonucleoside) in mRNA + S-adenosyl-L-homocysteine + H(+). S-adenosyl-L-methionine-dependent methyltransferase that mediates mRNA cap 2'-O-ribose methylation to the 5'-cap structure of late viral transcripts. This Lepidoptera (butterflies and moths) protein is Cap-specific mRNA (nucleoside-2'-O-)-methyltransferase.